We begin with the raw amino-acid sequence, 322 residues long: Undecaprenyl-phosphate 4-deoxy-4-formamido-L-arabinose transferase (322 aa).

Residues 1–235 (MFEIHPVKKV…TCLTTTPLRM (235 aa)) are Cytoplasmic-facing. Residues 236-256 (LSLLGSIIAIGGFSIAVLLVI) traverse the membrane as a helical segment. The Periplasmic segment spans residues 257-269 (LRLTFGPQWAAEG). Residues 270–290 (VFMLFAVLFTFIGAQFIGMGL) traverse the membrane as a helical segment. The Cytoplasmic segment spans residues 291 to 322 (LGEYIGRIYTDVRARPRYFVQQVIRPSSKENE).

It belongs to the glycosyltransferase 2 family.

It is found in the cell inner membrane. The catalysed reaction is UDP-4-deoxy-4-formamido-beta-L-arabinose + di-trans,octa-cis-undecaprenyl phosphate = 4-deoxy-4-formamido-alpha-L-arabinopyranosyl di-trans,octa-cis-undecaprenyl phosphate + UDP. It participates in glycolipid biosynthesis; 4-amino-4-deoxy-alpha-L-arabinose undecaprenyl phosphate biosynthesis; 4-amino-4-deoxy-alpha-L-arabinose undecaprenyl phosphate from UDP-4-deoxy-4-formamido-beta-L-arabinose and undecaprenyl phosphate: step 1/2. The protein operates within bacterial outer membrane biogenesis; lipopolysaccharide biosynthesis. In terms of biological role, catalyzes the transfer of 4-deoxy-4-formamido-L-arabinose from UDP to undecaprenyl phosphate. The modified arabinose is attached to lipid A and is required for resistance to polymyxin and cationic antimicrobial peptides. The polypeptide is Undecaprenyl-phosphate 4-deoxy-4-formamido-L-arabinose transferase (Escherichia coli O17:K52:H18 (strain UMN026 / ExPEC)).